A 333-amino-acid polypeptide reads, in one-letter code: Ribosomal protein L11 methyltransferase (333 aa).

The S-adenosyl-L-methionine site is built by T160, G181, D203, and N267.

This sequence belongs to the methyltransferase superfamily. PrmA family.

The protein localises to the cytoplasm. The enzyme catalyses L-lysyl-[protein] + 3 S-adenosyl-L-methionine = N(6),N(6),N(6)-trimethyl-L-lysyl-[protein] + 3 S-adenosyl-L-homocysteine + 3 H(+). Its function is as follows. Methylates ribosomal protein L11. In Lachnoclostridium phytofermentans (strain ATCC 700394 / DSM 18823 / ISDg) (Clostridium phytofermentans), this protein is Ribosomal protein L11 methyltransferase.